Consider the following 303-residue polypeptide: MAAAKFTALLIAGPTASGKSALALRLAEKLGGILINADSMQVYRDLRILSARPSAEEELRAPHRLFGAIDGAVNFSVGLWLEAARNILEEARQAGALPIFVGGTGLYFKALTQGLSDIPAVPDDIRAKLRARTEGVAATELHAELSARDPLMAARLRPSDPQRLLRALEVLEATGRSLASFQSRRGPPVLDPAATRAIFLSPERAALNLRIDERFEAMLASGAWAEVEALRRRGLDPALPLMRAHGVPHLIAHLEGKIPQDEAIRLGKRDTRAYARRQFTFARHQLPGFVWAEPREAEALALA.

An ATP-binding site is contributed by 13–20 (GPTASGKS). 15 to 20 (TASGKS) contributes to the substrate binding site. 2 interaction with substrate tRNA regions span residues 38–41 (DSMQ) and 162–166 (QRLLR).

The protein belongs to the IPP transferase family. As to quaternary structure, monomer. Mg(2+) serves as cofactor.

The enzyme catalyses adenosine(37) in tRNA + dimethylallyl diphosphate = N(6)-dimethylallyladenosine(37) in tRNA + diphosphate. Functionally, catalyzes the transfer of a dimethylallyl group onto the adenine at position 37 in tRNAs that read codons beginning with uridine, leading to the formation of N6-(dimethylallyl)adenosine (i(6)A). The chain is tRNA dimethylallyltransferase from Methylocella silvestris (strain DSM 15510 / CIP 108128 / LMG 27833 / NCIMB 13906 / BL2).